The following is a 223-amino-acid chain: Uracil-DNA glycosylase (223 aa).

Asp-67 functions as the Proton acceptor in the catalytic mechanism.

Belongs to the uracil-DNA glycosylase (UDG) superfamily. UNG family.

It localises to the cytoplasm. It catalyses the reaction Hydrolyzes single-stranded DNA or mismatched double-stranded DNA and polynucleotides, releasing free uracil.. Functionally, excises uracil residues from the DNA which can arise as a result of misincorporation of dUMP residues by DNA polymerase or due to deamination of cytosine. The sequence is that of Uracil-DNA glycosylase from Borreliella burgdorferi (strain ZS7) (Borrelia burgdorferi).